The chain runs to 570 residues: Polypeptide N-acetylgalactosaminyltransferase 2 (570 aa).

Over 1-6 (MRRRSR) the chain is Cytoplasmic. The chain crosses the membrane as a helical; Signal-anchor for type II membrane protein span at residues 7-24 (MLLCFALLWVLGIAYYMY). Topologically, residues 25–570 (SGGGSALAAG…QWKFSLNLQQ (546 aa)) are lumenal. Serine 29 is a glycosylation site (O-linked (Xyl...) (chondroitin sulfate) serine). Cystine bridges form between cysteine 125/cysteine 353, cysteine 344/cysteine 422, cysteine 455/cysteine 472, and cysteine 495/cysteine 512. A catalytic subdomain A region spans residues 134-239 (LPATSVVITF…ERWLEPLLER (106 aa)). Positions 142, 175, and 200 each coordinate substrate. Aspartate 223 lines the Mn(2+) pocket. Serine 224 contacts substrate. Histidine 225 lines the Mn(2+) pocket. The segment at 299 to 361 (PIKTPMIAGG…PCSRVGHVFR (63 aa)) is catalytic subdomain B. Tryptophan 330 is a substrate binding site. Histidine 358 contributes to the Mn(2+) binding site. Substrate is bound by residues arginine 361, histidine 364, and tyrosine 366. A Ricin B-type lectin domain is found at 442–565 (QDIAFGALQQ…PALSQQWKFS (124 aa)). The N-linked (GlcNAc...) asparagine glycan is linked to asparagine 515. Serine 535 is modified (phosphoserine). An intrachain disulfide couples cysteine 538 to cysteine 554.

Belongs to the glycosyltransferase 2 family. GalNAc-T subfamily. The cofactor is Mn(2+). In terms of tissue distribution, widely expressed at high level.

The protein resides in the golgi apparatus. It is found in the golgi stack membrane. The protein localises to the secreted. The catalysed reaction is L-seryl-[protein] + UDP-N-acetyl-alpha-D-galactosamine = a 3-O-[N-acetyl-alpha-D-galactosaminyl]-L-seryl-[protein] + UDP + H(+). It catalyses the reaction L-threonyl-[protein] + UDP-N-acetyl-alpha-D-galactosamine = a 3-O-[N-acetyl-alpha-D-galactosaminyl]-L-threonyl-[protein] + UDP + H(+). It participates in protein modification; protein glycosylation. Catalyzes the initial reaction in O-linked oligosaccharide biosynthesis, the transfer of an N-acetyl-D-galactosamine residue to a serine or threonine residue on the protein receptor. Has a broad spectrum of substrates for peptides such as EA2, Muc5AC, Muc1a, Muc1b. Probably involved in O-linked glycosylation of the immunoglobulin A1 (IgA1) hinge region. Involved in O-linked glycosylation of APOC-III, ANGPTL3 and PLTP. It participates in the regulation of HDL-C metabolism. This chain is Polypeptide N-acetylgalactosaminyltransferase 2 (Galnt2), found in Mus musculus (Mouse).